Reading from the N-terminus, the 306-residue chain is Homoserine kinase (306 aa).

90–100 (PLARGLGSSAS) contacts ATP.

It belongs to the GHMP kinase family. Homoserine kinase subfamily.

The protein resides in the cytoplasm. It catalyses the reaction L-homoserine + ATP = O-phospho-L-homoserine + ADP + H(+). Its pathway is amino-acid biosynthesis; L-threonine biosynthesis; L-threonine from L-aspartate: step 4/5. Catalyzes the ATP-dependent phosphorylation of L-homoserine to L-homoserine phosphate. The polypeptide is Homoserine kinase (Staphylococcus epidermidis (strain ATCC 35984 / DSM 28319 / BCRC 17069 / CCUG 31568 / BM 3577 / RP62A)).